The sequence spans 216 residues: Probable RNA 2'-phosphotransferase 1 (216 aa).

It belongs to the KptA/TPT1 family.

In terms of biological role, removes the 2'-phosphate from RNA via an intermediate in which the phosphate is ADP-ribosylated by NAD followed by a presumed transesterification to release the RNA and generate ADP-ribose 1''-2''-cyclic phosphate (APPR&gt;P). May function as an ADP-ribosylase. The sequence is that of Probable RNA 2'-phosphotransferase 1 (kptA1) from Archaeoglobus fulgidus (strain ATCC 49558 / DSM 4304 / JCM 9628 / NBRC 100126 / VC-16).